The following is a 223-amino-acid chain: Thiopurine S-methyltransferase (223 aa).

S-adenosyl-L-methionine-binding residues include Trp10, Leu45, Glu66, and Arg127.

Belongs to the class I-like SAM-binding methyltransferase superfamily. TPMT family.

Its subcellular location is the cytoplasm. The enzyme catalyses S-adenosyl-L-methionine + a thiopurine = S-adenosyl-L-homocysteine + a thiopurine S-methylether.. The chain is Thiopurine S-methyltransferase from Shewanella woodyi (strain ATCC 51908 / MS32).